The primary structure comprises 407 residues: Bifunctional enzyme IspD/IspF (407 aa).

The interval 1–247 (MVHIQADGAR…RLSHNALPDV (247 aa)) is 2-C-methyl-D-erythritol 4-phosphate cytidylyltransferase. The interval 248–407 (RTGNGYDVHQ…ATVVFQGKPQ (160 aa)) is 2-C-methyl-D-erythritol 2,4-cyclodiphosphate synthase. The a divalent metal cation site is built by D254 and H256. 4-CDP-2-C-methyl-D-erythritol 2-phosphate contacts are provided by residues 254–256 (DVH) and 280–281 (HS). Residue H288 coordinates a divalent metal cation. Residues 302–304 (DIG), 378–381 (TTNE), F385, and R388 contribute to the 4-CDP-2-C-methyl-D-erythritol 2-phosphate site.

This sequence in the N-terminal section; belongs to the IspD/TarI cytidylyltransferase family. IspD subfamily. It in the C-terminal section; belongs to the IspF family. A divalent metal cation serves as cofactor.

It catalyses the reaction 2-C-methyl-D-erythritol 4-phosphate + CTP + H(+) = 4-CDP-2-C-methyl-D-erythritol + diphosphate. It carries out the reaction 4-CDP-2-C-methyl-D-erythritol 2-phosphate = 2-C-methyl-D-erythritol 2,4-cyclic diphosphate + CMP. Its pathway is isoprenoid biosynthesis; isopentenyl diphosphate biosynthesis via DXP pathway; isopentenyl diphosphate from 1-deoxy-D-xylulose 5-phosphate: step 2/6. It functions in the pathway isoprenoid biosynthesis; isopentenyl diphosphate biosynthesis via DXP pathway; isopentenyl diphosphate from 1-deoxy-D-xylulose 5-phosphate: step 4/6. Bifunctional enzyme that catalyzes the formation of 4-diphosphocytidyl-2-C-methyl-D-erythritol from CTP and 2-C-methyl-D-erythritol 4-phosphate (MEP) (IspD), and catalyzes the conversion of 4-diphosphocytidyl-2-C-methyl-D-erythritol 2-phosphate (CDP-ME2P) to 2-C-methyl-D-erythritol 2,4-cyclodiphosphate (ME-CPP) with a corresponding release of cytidine 5-monophosphate (CMP) (IspF). This is Bifunctional enzyme IspD/IspF from Allorhizobium ampelinum (strain ATCC BAA-846 / DSM 112012 / S4) (Agrobacterium vitis (strain S4)).